Consider the following 463-residue polypeptide: Glutamate--tRNA ligase (463 aa).

A 'HIGH' region motif is present at residues proline 10–glycine 20. The 'KMSKS' region signature appears at lysine 252–arginine 256. Position 255 (lysine 255) interacts with ATP.

It belongs to the class-I aminoacyl-tRNA synthetase family. Glutamate--tRNA ligase type 1 subfamily. As to quaternary structure, monomer.

It is found in the cytoplasm. It carries out the reaction tRNA(Glu) + L-glutamate + ATP = L-glutamyl-tRNA(Glu) + AMP + diphosphate. Catalyzes the attachment of glutamate to tRNA(Glu) in a two-step reaction: glutamate is first activated by ATP to form Glu-AMP and then transferred to the acceptor end of tRNA(Glu). The chain is Glutamate--tRNA ligase from Mycoplasmopsis agalactiae (strain NCTC 10123 / CIP 59.7 / PG2) (Mycoplasma agalactiae).